Reading from the N-terminus, the 404-residue chain is Formate-dependent phosphoribosylglycinamide formyltransferase (404 aa).

N(1)-(5-phospho-beta-D-ribosyl)glycinamide contacts are provided by residues 25–26 and Glu-85; that span reads EL. ATP is bound by residues Arg-118, Lys-159, 164–169, 199–202, and Glu-207; these read SSGKGQ and EGFV. An ATP-grasp domain is found at 123 to 318; the sequence is RLAAEELGLP…EFELHARAIL (196 aa). Positions 277 and 289 each coordinate Mg(2+). N(1)-(5-phospho-beta-D-ribosyl)glycinamide contacts are provided by residues Asp-296, Lys-365, and 372 to 373; that span reads RR.

This sequence belongs to the PurK/PurT family. Homodimer.

The enzyme catalyses N(1)-(5-phospho-beta-D-ribosyl)glycinamide + formate + ATP = N(2)-formyl-N(1)-(5-phospho-beta-D-ribosyl)glycinamide + ADP + phosphate + H(+). Its pathway is purine metabolism; IMP biosynthesis via de novo pathway; N(2)-formyl-N(1)-(5-phospho-D-ribosyl)glycinamide from N(1)-(5-phospho-D-ribosyl)glycinamide (formate route): step 1/1. Its function is as follows. Involved in the de novo purine biosynthesis. Catalyzes the transfer of formate to 5-phospho-ribosyl-glycinamide (GAR), producing 5-phospho-ribosyl-N-formylglycinamide (FGAR). Formate is provided by PurU via hydrolysis of 10-formyl-tetrahydrofolate. The chain is Formate-dependent phosphoribosylglycinamide formyltransferase from Burkholderia thailandensis (strain ATCC 700388 / DSM 13276 / CCUG 48851 / CIP 106301 / E264).